The chain runs to 109 residues: Biphenyl dioxygenase system ferredoxin subunit (109 aa).

One can recognise a Rieske domain in the interval 4-100; sequence TRVCDRRDVP…IRIEDNDVLV (97 aa). Positions 43, 45, 63, and 66 each coordinate [2Fe-2S] cluster.

This sequence belongs to the bacterial ring-hydroxylating dioxygenase ferredoxin component family. As to quaternary structure, this dioxygenase system consists of four proteins: the two subunits of the hydroxylase component (BphA and BphE), a ferredoxin (BphF) and a ferredoxin reductase (BphG).

Its function is as follows. This protein seems to be a 2Fe-2S ferredoxin. The polypeptide is Biphenyl dioxygenase system ferredoxin subunit (bphF) (Paraburkholderia xenovorans (strain LB400)).